The chain runs to 687 residues: Transcription activator of gluconeogenesis SNOG_12336 (687 aa).

Positions 1–56 are disordered; the sequence is MASPDAEDASPSPEYRSDLDDDMAAEQKTDDGSPSQKSSNGQKPASNAKDPLRPRR. The segment covering 32–45 has biased composition (polar residues); it reads GSPSQKSSNGQKPA. Residues 63–91 constitute a DNA-binding region (zn(2)-C6 fungal-type); sequence CFACQRAHLTCGDERPCTRCIKRGLQDHC. Polar residues-rich tracts occupy residues 150-159 and 169-179; these read PSGTFYQPPS and HGRSFSDQQSP. Disordered regions lie at residues 150–214, 300–411, and 536–561; these read PSGT…GPLF, ESQS…KRHR, and GNSR…GQEA. The span at 195-212 shows a compositional bias: low complexity; that stretch reads PPSSISQGQPGQMQQFGP. Over residues 300 to 318 the composition is skewed to polar residues; sequence ESQSRQNSMHIHTPTSSAT. Residues 342-357 are compositionally biased toward low complexity; it reads PSSHSTASPASTDASA. Composition is skewed to polar residues over residues 362–384, 392–402, and 546–561; these read NPLS…SPTT, RPPSTALQPIH, and MSTQ…GQEA. A PAS domain is found at 482–553; it reads NLMTLQDHFT…SEMSTQTNTT (72 aa).

Belongs to the ERT1/acuK family.

The protein localises to the nucleus. Functionally, transcription factor which regulates nonfermentable carbon utilization. Activator of gluconeogenetic genes. This is Transcription activator of gluconeogenesis SNOG_12336 from Phaeosphaeria nodorum (strain SN15 / ATCC MYA-4574 / FGSC 10173) (Glume blotch fungus).